The primary structure comprises 346 residues: Protein phosphatase 1 regulatory subunit 7 (346 aa).

Over residues 1–13 the composition is skewed to acidic residues; sequence MADEEGETEVQEM. The tract at residues 1–46 is disordered; sequence MADEEGETEVQEMEVDRRESDESADDEAKEKPDRVDGGVKNGEVPL. Basic and acidic residues predominate over residues 14–37; it reads EVDRRESDESADDEAKEKPDRVDG. LRR repeat units lie at residues 63–84, 85–106, 107–128, 129–150, 151–172, 173–194, 195–216, 217–238, 239–260, 261–282, and 283–304; these read EAED…EVLK, KVKT…EQLV, TLTE…ETLR, DLQI…ESLS, HLQR…GTLT, QLRL…DSLR, ELDS…ETLT, NLTV…QNLV, NLRE…ENNN, KLTT…KHLS, and ELQE…EELS. Residues 317–346 enclose the LRRCT domain; that stretch reads NPLQKDAQYRRKIMLALPSVRQIDATFVRF.

It belongs to the SDS22 family.

The protein localises to the nucleus. In terms of biological role, regulatory subunit of protein phosphatase 1. The chain is Protein phosphatase 1 regulatory subunit 7 (ppp1r7) from Xenopus tropicalis (Western clawed frog).